The sequence spans 414 residues: Eukaryotic initiation factor 4A (414 aa).

Positions 41–69 (ESFDDMGLQENLLRGIYAYGFEKPSAIQQ) match the Q motif motif. Residues 72–242 (IVPFCKGLDV…RKFMNKPVRI (171 aa)) enclose the Helicase ATP-binding domain. 85 to 92 (AQSGTGKT) contributes to the ATP binding site. The DEAD box motif lies at 190 to 193 (DEAD). The Helicase C-terminal domain maps to 253–414 (GIKQFYVNVE…ELPANVADLL (162 aa)).

The protein belongs to the DEAD box helicase family. eIF4A subfamily. In terms of assembly, eIF4F is a multi-subunit complex, the composition of which varies with external and internal environmental conditions. It is composed of at least EIF4A, EIF4E and EIF4G.

The catalysed reaction is ATP + H2O = ADP + phosphate + H(+). Its function is as follows. ATP-dependent RNA helicase which is a subunit of the eIF4F complex involved in cap recognition and is required for mRNA binding to ribosome. In the current model of translation initiation, eIF4A unwinds RNA secondary structures in the 5'-UTR of mRNAs which is necessary to allow efficient binding of the small ribosomal subunit, and subsequent scanning for the initiator codon. The sequence is that of Eukaryotic initiation factor 4A from Triticum aestivum (Wheat).